A 1462-amino-acid polypeptide reads, in one-letter code: DNA polymerase III PolC-type (1462 aa).

Residues 424–580 (YVVFDVETTG…YDAEATGRLL (157 aa)) enclose the Exonuclease domain.

The protein belongs to the DNA polymerase type-C family. PolC subfamily.

Its subcellular location is the cytoplasm. It carries out the reaction DNA(n) + a 2'-deoxyribonucleoside 5'-triphosphate = DNA(n+1) + diphosphate. Required for replicative DNA synthesis. This DNA polymerase also exhibits 3' to 5' exonuclease activity. The chain is DNA polymerase III PolC-type from Streptococcus sanguinis (strain SK36).